A 199-amino-acid polypeptide reads, in one-letter code: ATP-dependent Clp protease proteolytic subunit 2 (199 aa).

The active-site Nucleophile is serine 98. Histidine 123 is an active-site residue.

The protein belongs to the peptidase S14 family. As to quaternary structure, fourteen ClpP subunits assemble into 2 heptameric rings which stack back to back to give a disk-like structure with a central cavity, resembling the structure of eukaryotic proteasomes.

It is found in the cytoplasm. The enzyme catalyses Hydrolysis of proteins to small peptides in the presence of ATP and magnesium. alpha-casein is the usual test substrate. In the absence of ATP, only oligopeptides shorter than five residues are hydrolyzed (such as succinyl-Leu-Tyr-|-NHMec, and Leu-Tyr-Leu-|-Tyr-Trp, in which cleavage of the -Tyr-|-Leu- and -Tyr-|-Trp bonds also occurs).. Cleaves peptides in various proteins in a process that requires ATP hydrolysis. Has a chymotrypsin-like activity. Plays a major role in the degradation of misfolded proteins. This chain is ATP-dependent Clp protease proteolytic subunit 2, found in Corynebacterium diphtheriae (strain ATCC 700971 / NCTC 13129 / Biotype gravis).